Here is a 239-residue protein sequence, read N- to C-terminus: Pyridoxine 5'-phosphate synthase (239 aa).

3-amino-2-oxopropyl phosphate is bound at residue asparagine 7. 9-10 (DH) provides a ligand contact to 1-deoxy-D-xylulose 5-phosphate. Position 18 (arginine 18) interacts with 3-amino-2-oxopropyl phosphate. The Proton acceptor role is filled by histidine 43. Residues arginine 45 and histidine 50 each coordinate 1-deoxy-D-xylulose 5-phosphate. Catalysis depends on glutamate 70, which acts as the Proton acceptor. 1-deoxy-D-xylulose 5-phosphate is bound at residue threonine 100. The Proton donor role is filled by histidine 191. Residues glycine 192 and 213 to 214 (GH) contribute to the 3-amino-2-oxopropyl phosphate site.

This sequence belongs to the PNP synthase family. Homooctamer; tetramer of dimers.

Its subcellular location is the cytoplasm. The enzyme catalyses 3-amino-2-oxopropyl phosphate + 1-deoxy-D-xylulose 5-phosphate = pyridoxine 5'-phosphate + phosphate + 2 H2O + H(+). Its pathway is cofactor biosynthesis; pyridoxine 5'-phosphate biosynthesis; pyridoxine 5'-phosphate from D-erythrose 4-phosphate: step 5/5. Functionally, catalyzes the complicated ring closure reaction between the two acyclic compounds 1-deoxy-D-xylulose-5-phosphate (DXP) and 3-amino-2-oxopropyl phosphate (1-amino-acetone-3-phosphate or AAP) to form pyridoxine 5'-phosphate (PNP) and inorganic phosphate. The polypeptide is Pyridoxine 5'-phosphate synthase (Trichlorobacter lovleyi (strain ATCC BAA-1151 / DSM 17278 / SZ) (Geobacter lovleyi)).